Here is a 254-residue protein sequence, read N- to C-terminus: Acetylglutamate kinase (254 aa).

Residues 40-41 (GG), Arg62, and Asn154 each bind substrate.

The protein belongs to the acetylglutamate kinase family. ArgB subfamily.

It localises to the cytoplasm. The enzyme catalyses N-acetyl-L-glutamate + ATP = N-acetyl-L-glutamyl 5-phosphate + ADP. It functions in the pathway amino-acid biosynthesis; L-arginine biosynthesis; N(2)-acetyl-L-ornithine from L-glutamate: step 2/4. In terms of biological role, catalyzes the ATP-dependent phosphorylation of N-acetyl-L-glutamate. This is Acetylglutamate kinase from Staphylococcus aureus (strain Mu3 / ATCC 700698).